Here is a 554-residue protein sequence, read N- to C-terminus: Acetyl-S-ACP:malonate ACP transferase (554 aa).

The protein resides in the cytoplasm. It carries out the reaction acetyl-[ACP] + malonate = malonyl-[ACP] + acetate. Its function is as follows. Alpha subunit of the biotin-independent and biotin-dependent malonate decarboxylase multienzyme complex (EC 4.1.1.88 and EC 7.2.4.4, respectively). Acts as an acyl-carrier protein (ACP) transferase component. This first step in malonate decarboxylation involves the exchange of an acetyl thioester residue bound to the activated ACP subunit for a malonyl thioester residue. Has a weak activity with acetyl-CoA as substrate. The polypeptide is Acetyl-S-ACP:malonate ACP transferase (madA) (Malonomonas rubra).